The chain runs to 443 residues: ATP-dependent protease ATPase subunit HslU (443 aa).

ATP-binding positions include Val18, 60-65 (GVGKTE), Asp256, Glu321, and Arg393.

Belongs to the ClpX chaperone family. HslU subfamily. In terms of assembly, a double ring-shaped homohexamer of HslV is capped on each side by a ring-shaped HslU homohexamer. The assembly of the HslU/HslV complex is dependent on binding of ATP.

It localises to the cytoplasm. Its function is as follows. ATPase subunit of a proteasome-like degradation complex; this subunit has chaperone activity. The binding of ATP and its subsequent hydrolysis by HslU are essential for unfolding of protein substrates subsequently hydrolyzed by HslV. HslU recognizes the N-terminal part of its protein substrates and unfolds these before they are guided to HslV for hydrolysis. The sequence is that of ATP-dependent protease ATPase subunit HslU from Azoarcus sp. (strain BH72).